Reading from the N-terminus, the 101-residue chain is Small ribosomal subunit protein uS14 (101 aa).

This sequence belongs to the universal ribosomal protein uS14 family. As to quaternary structure, part of the 30S ribosomal subunit. Contacts proteins S3 and S10.

In terms of biological role, binds 16S rRNA, required for the assembly of 30S particles and may also be responsible for determining the conformation of the 16S rRNA at the A site. The chain is Small ribosomal subunit protein uS14 from Chromohalobacter salexigens (strain ATCC BAA-138 / DSM 3043 / CIP 106854 / NCIMB 13768 / 1H11).